A 100-amino-acid chain; its full sequence is C-X-C motif chemokine 2 (100 aa).

The N-terminal stretch at 1 to 27 is a signal peptide; the sequence is MAPPTCRLLSAALVLLLLLATNHQATG. Disulfide bonds link cysteine 36–cysteine 62 and cysteine 38–cysteine 78.

This sequence belongs to the intercrine alpha (chemokine CxC) family. As to quaternary structure, homotetramer.

It is found in the secreted. Chemotactic for human polymorphonuclear leukocytes but does not induce chemokinesis or an oxidative burst. This is C-X-C motif chemokine 2 (Cxcl2) from Mus musculus (Mouse).